Reading from the N-terminus, the 329-residue chain is GTPase Obg (329 aa).

The Obg domain maps to 1–159 (MQFIDQARIT…WFLQLELKLL (159 aa)). The OBG-type G domain maps to 160 to 328 (AEVGIIGLPN…LLAQVWKELG (169 aa)). Residues 166 to 173 (GLPNAGKS), 191 to 195 (FTTLV), 213 to 216 (DIPG), 280 to 283 (NKQE), and 309 to 311 (SAA) contribute to the ATP site. Residues serine 173 and threonine 193 each coordinate Mg(2+).

This sequence belongs to the TRAFAC class OBG-HflX-like GTPase superfamily. OBG GTPase family. As to quaternary structure, monomer. Mg(2+) serves as cofactor.

The protein localises to the cytoplasm. An essential GTPase which binds GTP, GDP and possibly (p)ppGpp with moderate affinity, with high nucleotide exchange rates and a fairly low GTP hydrolysis rate. Plays a role in control of the cell cycle, stress response, ribosome biogenesis and in those bacteria that undergo differentiation, in morphogenesis control. In Prochlorococcus marinus (strain MIT 9313), this protein is GTPase Obg.